Reading from the N-terminus, the 443-residue chain is Threonine/serine transporter TdcC (443 aa).

Helical transmembrane passes span 22 to 42 (TTWT…FFPI), 44 to 64 (AGFG…PIAF), 97 to 117 (GVVI…IYGV), 140 to 160 (FVAL…KDLM), 163 to 183 (VMSY…LSLI), 207 to 227 (ILIT…FSPI), 261 to 281 (MLMV…LSPA), 311 to 331 (FAIT…FKSF), 366 to 386 (ISMI…PNIL), 389 to 409 (IEAM…MYAI), and 423 to 443 (DNVF…YKLF).

It belongs to the amino acid/polyamine transporter 2 family. SdaC/TdcC subfamily.

The protein localises to the cell inner membrane. It carries out the reaction L-threonine(in) + H(+)(in) = L-threonine(out) + H(+)(out). The catalysed reaction is L-serine(in) + H(+)(in) = L-serine(out) + H(+)(out). Functionally, involved in the import of threonine and serine into the cell, with the concomitant import of a proton (symport system). The protein is Threonine/serine transporter TdcC of Shigella boydii serotype 18 (strain CDC 3083-94 / BS512).